The sequence spans 592 residues: Vacuolin-B (592 aa).

Over residues Met-1–Ser-30 the composition is skewed to polar residues. Residues Met-1 to Asn-35 are disordered. Residues Lys-480–Gln-534 are a coiled coil. The oligomerization domain stretch occupies residues Asp-491–Glu-555.

It belongs to the vacuolin family. Homotrimer.

It is found in the endosome membrane. The protein resides in the lysosome membrane. Functionally, negative regulator of late steps of the endocytic pathway. This Dictyostelium discoideum (Social amoeba) protein is Vacuolin-B (vacB).